The chain runs to 235 residues: High mobility group protein 1.2 (235 aa).

A compositionally biased stretch (polar residues) spans 1–34 (MNSGYSANIFPSSSSPTLYQSHQLQPNPSATMYQ). Positions 1-47 (MNSGYSANIFPSSSSPTLYQSHQLQPNPSATMYQATPRDMGKPPVRG) are disordered. 2 consecutive DNA-binding regions (HMG box) follow at residues 47 to 117 (GKTS…AAYG) and 135 to 203 (PKRA…RNYK).

The protein belongs to the HMGB family.

It is found in the nucleus. In Caenorhabditis elegans, this protein is High mobility group protein 1.2 (hmg-1.2).